Consider the following 958-residue polypeptide: Transportin MOS14 (958 aa).

One can recognise an Importin N-terminal domain in the interval Ala-26 to Lys-93.

Belongs to the importin beta family. As to quaternary structure, interacts with RS2Z33, RSZ21, RS31A, SR34 and RAN1.

Its subcellular location is the nucleus. Its function is as follows. Functions as a nuclear import receptor for serine-arginine rich (SR) proteins. Regulates nuclear import of SR proteins that are required for proper splicing of the two resistance (R) genes SNC1 and RPS4, a crucial step for their functions in plant immunity. In Arabidopsis thaliana (Mouse-ear cress), this protein is Transportin MOS14.